Here is a 769-residue protein sequence, read N- to C-terminus: Neutral alpha-glucosidase C (769 aa).

Residue aspartate 366 is the Nucleophile of the active site. Glutamate 369 is a catalytic residue. Aspartate 442 (proton donor) is an active-site residue.

This sequence belongs to the glycosyl hydrolase 31 family.

The enzyme catalyses Hydrolysis of terminal, non-reducing (1-&gt;4)-linked alpha-D-glucose residues with release of alpha-D-glucose.. In terms of biological role, has alpha-glucosidase activity. The polypeptide is Neutral alpha-glucosidase C (GANC) (Macaca fascicularis (Crab-eating macaque)).